The chain runs to 300 residues: MCSNNNTSSGSYGELQLHDESSGSCRKKQKKDKVRRRGPGVAELEKIRLQEEYKPPLSSSPSLPNIDHHHHTLFAPASSVYDLVMTSPNFSFPEKLASTLPVFPISYGSLIPPAPIFQRSQHSLMMNLPNPSPGAGRFYQFIEPPSNQRSCVDSVSQFLEEENKKIFTAKKRPWPFLTDTTKPSVGPTTTSTIIRPDATQNRSMGITPVQETGTTTSNPIAIDSPTSIPRHYPRFIPLGLQYEQQQQKLKDLDETMQWRSKKPFYSFIPSGDPSNDDQEQRPCDLFGSAADHGIDLNLKL.

The span at 1-11 (MCSNNNTSSGS) shows a compositional bias: polar residues. The tract at residues 1–64 (MCSNNNTSSG…PPLSSSPSLP (64 aa)) is disordered. Over residues 25 to 38 (CRKKQKKDKVRRRG) the composition is skewed to basic residues. The SPL motif lies at 37–45 (RGPGVAELE). Basic and acidic residues predominate over residues 43 to 54 (ELEKIRLQEEYK). A compositionally biased stretch (low complexity) spans 55 to 64 (PPLSSSPSLP). Residues 294–300 (IDLNLKL) carry the EAR motif.

Homodimer and heterodimer with SPL and SPEARs. Interacts with SPL, SPEAR1, SPEAR3 and SPEAR4. In terms of tissue distribution, expressed in leaves.

Its function is as follows. Adapter-like transcriptional repressor recruiting TPL/TPR corepressors to inhibit TCP transcription factors. May be involved in leaf development. The sequence is that of Protein SPEAR2 from Arabidopsis thaliana (Mouse-ear cress).